Reading from the N-terminus, the 168-residue chain is Translationally-controlled tumor protein homolog (168 aa).

A TCTP domain is found at 1-168 (MLLYKDVISG…FKDGLVSEKF (168 aa)). Serine 78 bears the Phosphoserine mark.

Belongs to the TCTP family.

It localises to the cytoplasm. In terms of biological role, involved in calcium binding and microtubule stabilization. May be a guanine nucleotide-free chaperone (GFC). The chain is Translationally-controlled tumor protein homolog (p23fy) from Schizosaccharomyces pombe (strain 972 / ATCC 24843) (Fission yeast).